The chain runs to 269 residues: Tryptophan synthase alpha chain (269 aa).

Catalysis depends on proton acceptor residues Glu-49 and Asp-60.

Belongs to the TrpA family. In terms of assembly, tetramer of two alpha and two beta chains.

The catalysed reaction is (1S,2R)-1-C-(indol-3-yl)glycerol 3-phosphate + L-serine = D-glyceraldehyde 3-phosphate + L-tryptophan + H2O. Its pathway is amino-acid biosynthesis; L-tryptophan biosynthesis; L-tryptophan from chorismate: step 5/5. Functionally, the alpha subunit is responsible for the aldol cleavage of indoleglycerol phosphate to indole and glyceraldehyde 3-phosphate. This chain is Tryptophan synthase alpha chain, found in Buchnera aphidicola subsp. Schlechtendalia chinensis.